Here is a 385-residue protein sequence, read N- to C-terminus: MHFIDQAEIEVQAGNGGDGIVAFRREKYVPAGGPSGGNGGRGGSVILVADPGLQTLLDFRFQPVIKAEHGAKGGPNHRSGASGADRLVRVPCGTMVFDTETGELLGDLVQPGDRLLVARGGKGGLGNAHFLSNHNRAPRQFTRGQPGERRRLRLELKLIAEVGIVGMPNAGKSTLISVVSSARPKIADYPFTTLQPNLGVVPHPAGDGVVFADIPGLIEGAHRGVGLGHDFLRHVERTRVLIHLVDGTAADPVRDYQIIQQELRAYGHGLSDKPQIVVLNKIDALEPQEVSERTQRLSMAAGAPVSAISAVARQGLEPLLQRVWQCLGRDPDLHRPAAASKIQPVRGQENLRIGVPLPSQNSEMSGYVYLGGGSAPRFAPDQVGH.

The 159-residue stretch at 1–159 (MHFIDQAEIE…RRLRLELKLI (159 aa)) folds into the Obg domain. Positions 160–328 (AEVGIVGMPN…LLQRVWQCLG (169 aa)) constitute an OBG-type G domain. GTP-binding positions include 166-173 (GMPNAGKS), 191-195 (FTTLQ), 213-216 (DIPG), 280-283 (NKID), and 309-311 (SAV). Mg(2+) is bound by residues S173 and T193.

This sequence belongs to the TRAFAC class OBG-HflX-like GTPase superfamily. OBG GTPase family. As to quaternary structure, monomer. Requires Mg(2+) as cofactor.

It is found in the cytoplasm. In terms of biological role, an essential GTPase which binds GTP, GDP and possibly (p)ppGpp with moderate affinity, with high nucleotide exchange rates and a fairly low GTP hydrolysis rate. Plays a role in control of the cell cycle, stress response, ribosome biogenesis and in those bacteria that undergo differentiation, in morphogenesis control. The protein is GTPase Obg of Synechococcus sp. (strain JA-3-3Ab) (Cyanobacteria bacterium Yellowstone A-Prime).